A 238-amino-acid polypeptide reads, in one-letter code: Orotidine 5'-phosphate decarboxylase (238 aa).

Residues Asp10, Lys32, 59–68, Thr122, Arg184, Gln193, Gly213, and Arg214 each bind substrate; that span reads DLKLHDIPNT. The Proton donor role is filled by Lys61.

This sequence belongs to the OMP decarboxylase family. Type 1 subfamily. As to quaternary structure, homodimer.

The catalysed reaction is orotidine 5'-phosphate + H(+) = UMP + CO2. The protein operates within pyrimidine metabolism; UMP biosynthesis via de novo pathway; UMP from orotate: step 2/2. Catalyzes the decarboxylation of orotidine 5'-monophosphate (OMP) to uridine 5'-monophosphate (UMP). In Bacillus mycoides (strain KBAB4) (Bacillus weihenstephanensis), this protein is Orotidine 5'-phosphate decarboxylase.